The primary structure comprises 210 residues: Late histone H1 (210 aa).

Disordered stretches follow at residues 1 to 21 (MSAA…HPPT) and 86 to 210 (SFKL…AAKK). The 75-residue stretch at 17-91 (AHPPTSQMVV…GASGSFKLGK (75 aa)) folds into the H15 domain. Positions 104–113 (AAAKKAKLAA) are enriched in basic residues. Residues 114 to 123 (KKKEQKEKKA) are compositionally biased toward basic and acidic residues. The segment covering 124–210 (AKTKARKEKL…KPAAKKAAKK (87 aa)) has biased composition (basic residues).

The protein belongs to the histone H1/H5 family.

The protein localises to the nucleus. Its subcellular location is the chromosome. Its function is as follows. Histones H1 are necessary for the condensation of nucleosome chains into higher-order structures. The protein is Late histone H1 of Lytechinus pictus (Painted sea urchin).